A 757-amino-acid chain; its full sequence is MTIRNHTLGFPRIGLNRELKKAQESYWAGNISQAELLAVGKELRARHWQQQANAGVELLPVGDFAWYDQVLGTSLLLGNIPPRHRNEDGRLDLDTLFRVARGRAPTGKPAAASEMTKWFNTNYHYIVPEFQQGQSFTLAWQQLLDEVDEALALGHNVKPVLLGPITYLWLGKVKGPEFDRLSLLDAILPVYQQVLSQLQQKGIEWVQIDEPALVLDLPIEWQNAYQVAYQALTGQVKLLLTTYFDGITHHLDIIKNLPVNGLHIDLCAGQDALQVIHQALPKDWVLSLGVINGRNVWKADLTTRYQQVVALKGKRPLWIGTSCSLLHSPIDLSAETKLDDEVKSWFAFAVQKCAEVALLAKALNAPEGEYDEQLAQYSAPIRQREHSSRVHNAKVAARLQAINAQDGERTSPYQQRAKVQRARFNFPLWPTTTIGSFPQTTEIRTVRLDFKKGRIDTTAYRTNISEHIKQAIDEQERLGLDVLVHGEAERNDMVEYFGEHFEGYVFTQNGWVQSYGSRCVKPPVIIGDISRPAPITVDWATYAQSLTDKPVKGMLTGPVTILCWSFPREDVSRETIAKQIALALRDEVDDLQKAGIGIIQIDEPALREGLPLRRDEWQAYLDWAVDAFKLSAAIADDETQIHTHMCYCEFNDIMEAIAALDADVITIETSRSDMELLEAFEHFDYPNEIGPGVYDIHSPNVPNVEWIVGLLRKAQSRIPAERLWVNPDCGLKTRGWSETRAALANMVEAAKYLRQNV.

Residues 17 to 20 (RELK) and lysine 117 contribute to the 5-methyltetrahydropteroyltri-L-glutamate site. L-homocysteine-binding positions include 434–436 (IGS) and glutamate 487. L-methionine-binding positions include 434–436 (IGS) and glutamate 487. Residues 518–519 (RC) and tryptophan 564 contribute to the 5-methyltetrahydropteroyltri-L-glutamate site. Aspartate 602 serves as a coordination point for L-homocysteine. Residue aspartate 602 participates in L-methionine binding. A 5-methyltetrahydropteroyltri-L-glutamate-binding site is contributed by glutamate 608. Residues histidine 644, cysteine 646, and glutamate 668 each contribute to the Zn(2+) site. Histidine 697 serves as the catalytic Proton donor. Zn(2+) is bound at residue cysteine 729.

It belongs to the vitamin-B12 independent methionine synthase family. Zn(2+) is required as a cofactor.

It carries out the reaction 5-methyltetrahydropteroyltri-L-glutamate + L-homocysteine = tetrahydropteroyltri-L-glutamate + L-methionine. It participates in amino-acid biosynthesis; L-methionine biosynthesis via de novo pathway; L-methionine from L-homocysteine (MetE route): step 1/1. In terms of biological role, catalyzes the transfer of a methyl group from 5-methyltetrahydrofolate to homocysteine resulting in methionine formation. The chain is 5-methyltetrahydropteroyltriglutamate--homocysteine methyltransferase from Proteus mirabilis (strain HI4320).